Here is a 171-residue protein sequence, read N- to C-terminus: MLRLLEEKIATPLGPLWVVCDEQFRLRAIEWEQYRDRMEQLLNIHYRHEGYERVSATNPGGLSDKLADYFAGNLAVIDTLETATGGTPFQREVWQALRAIPCGQVMHYGQLAAQLGRPGAARAVGAANGANPISIVVPCHRVIGRNGTLTGYAGGVQRKEWLLRHEGYLLL.

Cys-139 (nucleophile; methyl group acceptor) is an active-site residue.

This sequence belongs to the MGMT family.

Its subcellular location is the cytoplasm. The catalysed reaction is a 6-O-methyl-2'-deoxyguanosine in DNA + L-cysteinyl-[protein] = S-methyl-L-cysteinyl-[protein] + a 2'-deoxyguanosine in DNA. It carries out the reaction a 4-O-methyl-thymidine in DNA + L-cysteinyl-[protein] = a thymidine in DNA + S-methyl-L-cysteinyl-[protein]. Involved in the cellular defense against the biological effects of O6-methylguanine (O6-MeG) and O4-methylthymine (O4-MeT) in DNA. Repairs the methylated nucleobase in DNA by stoichiometrically transferring the methyl group to a cysteine residue in the enzyme. This is a suicide reaction: the enzyme is irreversibly inactivated. This is Methylated-DNA--protein-cysteine methyltransferase from Salmonella typhi.